A 397-amino-acid chain; its full sequence is tRNA pseudouridine synthase D (397 aa).

D76 acts as the Nucleophile in catalysis. Residues G151–V361 enclose the TRUD domain.

The protein belongs to the pseudouridine synthase TruD family.

It carries out the reaction uridine(13) in tRNA = pseudouridine(13) in tRNA. In terms of biological role, responsible for synthesis of pseudouridine from uracil-13 in transfer RNAs. The protein is tRNA pseudouridine synthase D of Geotalea daltonii (strain DSM 22248 / JCM 15807 / FRC-32) (Geobacter daltonii).